A 305-amino-acid polypeptide reads, in one-letter code: Acetaldehyde dehydrogenase (305 aa).

Cys-130 (acyl-thioester intermediate) is an active-site residue. NAD(+) contacts are provided by residues 161-169 (SVGPGTRKN) and Asn-272.

This sequence belongs to the acetaldehyde dehydrogenase family.

It carries out the reaction acetaldehyde + NAD(+) + CoA = acetyl-CoA + NADH + H(+). The chain is Acetaldehyde dehydrogenase from Leptothrix cholodnii (strain ATCC 51168 / LMG 8142 / SP-6) (Leptothrix discophora (strain SP-6)).